A 230-amino-acid chain; its full sequence is MTDDDRIKLEPGWKNALRAEFDQPYMHQLREFLRQEYAAGKEIYPPGPMIFNALNSTPLEQVKVVILGQDPYHGPGQAHGLCFSVQPGVPTPPSLVNIYKELHRDLNIPIASHGYLQSWAEQGVLLLNTTMTVERANAASHAKKGWEFFTDRIIQVVSEQCPNVVFLLWGAHAQSKQKLIDGTKHLVLKSVHPSPLSAYRGFLGCGHFSRTNGFLEQRGLAPINWALPPL.

Asp70 functions as the Proton acceptor in the catalytic mechanism.

It belongs to the uracil-DNA glycosylase (UDG) superfamily. UNG family.

It localises to the cytoplasm. It catalyses the reaction Hydrolyzes single-stranded DNA or mismatched double-stranded DNA and polynucleotides, releasing free uracil.. Its function is as follows. Excises uracil residues from the DNA which can arise as a result of misincorporation of dUMP residues by DNA polymerase or due to deamination of cytosine. The polypeptide is Uracil-DNA glycosylase (Pseudomonas putida (strain W619)).